The chain runs to 718 residues: Tensin-4 (718 aa).

Positions 1–14 (MSSSLLTGGHVVSL) are cleaved as a signal peptide. Disordered stretches follow at residues 188–244 (RETR…GLRA) and 272–437 (LPHS…AKDM). Polar residues predominate over residues 192–207 (SSSNESLIFSGNQGRG). Residues 208 to 219 (SSPHTPSSLSNS) are compositionally biased toward low complexity. A Phosphoserine modification is found at Ser230. The span at 272 to 304 (LPHSSLSSYPPSSRSLGSPASSSSSLHSLDRGS) shows a compositional bias: low complexity. 4 stretches are compositionally biased toward polar residues: residues 306–316 (CVRSSDAQVPS), 337–349 (QASS…TNSM), 367–393 (PAQQ…QATK), and 405–415 (TSPSHLCQATK). The 108-residue stretch at 451–558 (WFKPSITREQ…ALPCKLTIPQ (108 aa)) folds into the SH2 domain. One can recognise a PTB domain in the interval 585–711 (CHTLYLTSVS…SQVISLVTAL (127 aa)).

Belongs to the PTEN phosphatase protein family. As to quaternary structure, interacts (via SH2 domain) with Rho GTPase-activating protein DLC1 (via C-terminus); the interaction is independent of DLC1 tyrosine phosphorylation. Interacts with integrin ITGB1; the interaction displaces tensin TNS3 from the ITGB1 cytoplasmic tail and promotes ITGB1 stability. Interacts (via SH2 domain) with E3 ubiquitin-protein ligase CBL (phosphorylated on 'Tyr-781'); the interaction is enhanced in the presence of EGF and reduces interaction of CBL with EGFR. Interacts (via SH2 domain) with receptor tyrosine kinase MET (when phosphorylated); the interaction increases MET protein stability.

The protein localises to the cell junction. It localises to the focal adhesion. It is found in the cytoplasm. The protein resides in the cytoskeleton. Its function is as follows. Promotes EGF-induced cell migration by displacing tensin TNS3 from the cytoplasmic tail of integrin ITGB1 which results in dissociation of TNS3 from focal adhesions, disassembly of actin stress fibers and initiation of cell migration. Suppresses ligand-induced degradation of EGFR by reducing EGFR ubiquitination in the presence of EGF. Increases MET protein stability by inhibiting MET endocytosis and subsequent lysosomal degradation which leads to increased cell survival, proliferation and migration. The polypeptide is Tensin-4 (Tns4) (Rattus norvegicus (Rat)).